A 320-amino-acid polypeptide reads, in one-letter code: o-succinylbenzoate synthase (320 aa).

The Proton donor role is filled by Lys-133. Residues Asp-161, Glu-190, and Asp-213 each coordinate Mg(2+). The active-site Proton acceptor is Lys-235.

Belongs to the mandelate racemase/muconate lactonizing enzyme family. MenC type 1 subfamily. A divalent metal cation is required as a cofactor.

It catalyses the reaction (1R,6R)-6-hydroxy-2-succinyl-cyclohexa-2,4-diene-1-carboxylate = 2-succinylbenzoate + H2O. It participates in quinol/quinone metabolism; 1,4-dihydroxy-2-naphthoate biosynthesis; 1,4-dihydroxy-2-naphthoate from chorismate: step 4/7. It functions in the pathway quinol/quinone metabolism; menaquinone biosynthesis. Its function is as follows. Converts 2-succinyl-6-hydroxy-2,4-cyclohexadiene-1-carboxylate (SHCHC) to 2-succinylbenzoate (OSB). This Escherichia coli O9:H4 (strain HS) protein is o-succinylbenzoate synthase.